A 394-amino-acid polypeptide reads, in one-letter code: Elongation factor Tu (394 aa).

The tr-type G domain occupies 10 to 204; sequence KPHVNVGTIG…ALDSYIPEPE (195 aa). Residues 19-26 form a G1 region; sequence GHVDHGKT. 19-26 contacts GTP; sequence GHVDHGKT. Position 26 (Thr-26) interacts with Mg(2+). Residues 60–64 form a G2 region; that stretch reads GITIS. The G3 stretch occupies residues 81–84; sequence DCPG. GTP is bound by residues 81–85 and 136–139; these read DCPGH and NKCD. Positions 136-139 are G4; that stretch reads NKCD. The interval 174-176 is G5; sequence SAL.

This sequence belongs to the TRAFAC class translation factor GTPase superfamily. Classic translation factor GTPase family. EF-Tu/EF-1A subfamily. Monomer.

The protein localises to the cytoplasm. It carries out the reaction GTP + H2O = GDP + phosphate + H(+). Functionally, GTP hydrolase that promotes the GTP-dependent binding of aminoacyl-tRNA to the A-site of ribosomes during protein biosynthesis. This is Elongation factor Tu from Alteromonas mediterranea (strain DSM 17117 / CIP 110805 / LMG 28347 / Deep ecotype).